The sequence spans 111 residues: Small ribosomal subunit protein uS17 (111 aa).

This sequence belongs to the universal ribosomal protein uS17 family. In terms of assembly, part of the 30S ribosomal subunit.

Functionally, one of the primary rRNA binding proteins, it binds specifically to the 5'-end of 16S ribosomal RNA. The chain is Small ribosomal subunit protein uS17 from Methanocella arvoryzae (strain DSM 22066 / NBRC 105507 / MRE50).